The chain runs to 165 residues: Chorismate pyruvate-lyase (165 aa).

Substrate contacts are provided by methionine 35, arginine 77, leucine 115, and glutamate 156.

It belongs to the UbiC family. As to quaternary structure, monomer.

Its subcellular location is the cytoplasm. The enzyme catalyses chorismate = 4-hydroxybenzoate + pyruvate. It functions in the pathway cofactor biosynthesis; ubiquinone biosynthesis. In terms of biological role, removes the pyruvyl group from chorismate, with concomitant aromatization of the ring, to provide 4-hydroxybenzoate (4HB) for the ubiquinone pathway. In Citrobacter koseri (strain ATCC BAA-895 / CDC 4225-83 / SGSC4696), this protein is Chorismate pyruvate-lyase.